The primary structure comprises 147 residues: Hemoglobin subunit beta-1 (147 aa).

Val2 carries the post-translational modification N-acetylvaline. The Globin domain maps to 3–147 (HLTDAEKAAV…VASALAHKYH (145 aa)). Lys18 carries the post-translational modification N6-succinyllysine. A phosphoserine mark is found at Ser45, Ser51, and Ser53. N6-succinyllysine is present on Lys60. Positions 64 and 93 each coordinate heme b. Arg105 carries the asymmetric dimethylarginine modification. Position 124 is a phosphothreonine (Thr124).

The protein belongs to the globin family. Heterotetramer of two alpha chains and two beta chains. As to expression, red blood cells.

Its function is as follows. Involved in oxygen transport from the lung to the various peripheral tissues. The sequence is that of Hemoglobin subunit beta-1 (Hbb) from Rattus norvegicus (Rat).